The sequence spans 176 residues: Acireductone dioxygenase (176 aa).

Residues 1–21 form a disordered region; it reads MKAYWYDNKPGDQREPHDSGR. The span at 9 to 20 shows a compositional bias: basic and acidic residues; sequence KPGDQREPHDSG. H81, H83, E87, and H126 together coordinate Fe(2+). Positions 81, 83, 87, and 126 each coordinate Ni(2+).

This sequence belongs to the acireductone dioxygenase (ARD) family. Requires Fe(2+) as cofactor. Ni(2+) serves as cofactor.

The protein localises to the cytoplasm. Its subcellular location is the nucleus. The enzyme catalyses 1,2-dihydroxy-5-(methylsulfanyl)pent-1-en-3-one + O2 = 4-methylsulfanyl-2-oxobutanoate + formate + 2 H(+). The catalysed reaction is 1,2-dihydroxy-5-(methylsulfanyl)pent-1-en-3-one + O2 = 3-(methylsulfanyl)propanoate + CO + formate + 2 H(+). It functions in the pathway amino-acid biosynthesis; L-methionine biosynthesis via salvage pathway; L-methionine from S-methyl-5-thio-alpha-D-ribose 1-phosphate: step 5/6. Functionally, catalyzes 2 different reactions between oxygen and the acireductone 1,2-dihydroxy-3-keto-5-methylthiopentene (DHK-MTPene) depending upon the metal bound in the active site. Fe-containing acireductone dioxygenase (Fe-ARD) produces formate and 2-keto-4-methylthiobutyrate (KMTB), the alpha-ketoacid precursor of methionine in the methionine recycle pathway. Ni-containing acireductone dioxygenase (Ni-ARD) produces methylthiopropionate, carbon monoxide and formate, and does not lie on the methionine recycle pathway. This is Acireductone dioxygenase (adi1) from Aspergillus fumigatus (strain ATCC MYA-4609 / CBS 101355 / FGSC A1100 / Af293) (Neosartorya fumigata).